We begin with the raw amino-acid sequence, 302 residues long: Probable protein S-acyltransferase 13 (302 aa).

2 helical membrane-spanning segments follow: residues serine 17–valine 37 and valine 56–valine 76. Residues arginine 116–phenylalanine 166 form the DHHC domain. Cysteine 146 functions as the S-palmitoyl cysteine intermediate in the catalytic mechanism. Helical transmembrane passes span phenylalanine 166–phenylalanine 186 and serine 204–methionine 224.

Belongs to the DHHC palmitoyltransferase family.

Its subcellular location is the cell membrane. The protein localises to the cytoplasmic vesicle membrane. The catalysed reaction is L-cysteinyl-[protein] + hexadecanoyl-CoA = S-hexadecanoyl-L-cysteinyl-[protein] + CoA. Palmitoyl acyltransferase. This chain is Probable protein S-acyltransferase 13 (PAT13), found in Arabidopsis thaliana (Mouse-ear cress).